We begin with the raw amino-acid sequence, 1358 residues long: DNA-directed RNA polymerase subunit beta (1358 aa).

This sequence belongs to the RNA polymerase beta chain family. The RNAP catalytic core consists of 2 alpha, 1 beta, 1 beta' and 1 omega subunit. When a sigma factor is associated with the core the holoenzyme is formed, which can initiate transcription.

The enzyme catalyses RNA(n) + a ribonucleoside 5'-triphosphate = RNA(n+1) + diphosphate. Functionally, DNA-dependent RNA polymerase catalyzes the transcription of DNA into RNA using the four ribonucleoside triphosphates as substrates. The sequence is that of DNA-directed RNA polymerase subunit beta from Francisella tularensis subsp. mediasiatica (strain FSC147).